The following is a 189-amino-acid chain: Protein CURLY FLAG LEAF 1 (189 aa).

The EAR signature appears at 50 to 55 (TLELNS). In terms of domain architecture, WW spans 57–91 (LSLPCHWEQCLDLKTGEIYYINWKNGMRVKEDPRK). The disordered stretch occupies residues 90 to 148 (RKVMNADPDSGDSYGTVCSEEDSSYYDSEESSSESSPSSRENHKEEEEEEEEEEEEEED). Composition is skewed to acidic residues over residues 108–121 (SEED…EESS) and 135–148 (EEEE…EEED).

Interacts with BHLH122/CFLAP1 and BHLH80/CFLAP2. Binds to HDG1. In terms of tissue distribution, mostly observed in roots, flowers and siliques. Expressed in cells differentiated from epidermal cells such as trichomes, stigmatic papillar cells and guard cells, as well as in tissues undergoing abscission and dehiscence.

Negatively regulates the cuticle development by interacting with the HD-ZIP IV transcription factor HDG1. The polypeptide is Protein CURLY FLAG LEAF 1 (Arabidopsis thaliana (Mouse-ear cress)).